A 427-amino-acid chain; its full sequence is Putative F-box/FBD/LRR-repeat protein At4g13965 (427 aa).

In terms of domain architecture, F-box spans 13–61 (ADRISQLPEALIIQILSLLPTEVAVTTSVLSKQWQFLWKMLPKLNFDSL). LRR repeat units follow at residues 67 to 93 (FKTF…HLIV), 98 to 122 (CNSM…VLEV), 141 to 168 (TLEL…HLHY), 169 to 194 (VDFK…VVHR), 213 to 241 (LTIY…KIVG), and 258 to 284 (SMIV…FLEF). Residues 346–396 (KWNKPKIVPECLLFHLETFMWKGYEWKRNDETEVAKYILSNTNRLKRATFF) form the FBD domain.

The sequence is that of Putative F-box/FBD/LRR-repeat protein At4g13965 from Arabidopsis thaliana (Mouse-ear cress).